Consider the following 529-residue polypeptide: Transcription factor kayak (529 aa).

Polar residues predominate over residues 118–134 (LQGTDSDNSNASWADAQ). Disordered stretches follow at residues 118–166 (LQGT…SVNG) and 180–239 (NAGR…CRKR). Low complexity-rich tracts occupy residues 142–153 (TDTSSAHTDSTS) and 182–201 (GRGSTQGSNTNTSNSATPAR). The bZIP domain occupies 219–282 (EEKRRIRRER…NQLEFFLRAH (64 aa)). Residues 221–240 (KRRIRRERNKQAAARCRKRR) are basic motif. The interval 247 to 275 (LTYEVEQLEKKRDGLKKEMETLTDVKNQL) is leucine-zipper. Disordered stretches follow at residues 311 to 390 (AGSC…PMST) and 493 to 529 (DGGTGLTPVSGPLVPSQNKHPLELPTPTAEPSKLVSL). Residues 315–332 (DSGSSSHHNNNSNDSSNG) show a composition bias toward low complexity. Polar residues predominate over residues 340–350 (SLNSTGRSNSP). S349 carries the post-translational modification Phosphoserine. A compositionally biased stretch (low complexity) spans 363 to 375 (DGGLDSSCLLDQD). The span at 376–387 (GPPPSKRFPLPP) shows a compositional bias: pro residues.

It belongs to the bZIP family. Fos subfamily. As to quaternary structure, homodimer. Heterodimer with Jra. The kay-Jra heterodimer binds more stably to the AP-1 site than either of the two proteins alone.

Its subcellular location is the nucleus. In terms of biological role, developmentally regulated transcription factor AP-1 binds and recognizes the enhancer DNA sequence: 5'-TGA[CG]TCA-3'. May play a role in the function or determination of a particular subset of cells in the developing embryo. Is able to carry out its function either independently of or in conjunction with Jra. The sequence is that of Transcription factor kayak from Drosophila ananassae (Fruit fly).